Reading from the N-terminus, the 486-residue chain is UDP-N-acetylmuramate--L-alanine ligase (486 aa).

Position 126–132 (126–132 (GTHGKTT)) interacts with ATP.

This sequence belongs to the MurCDEF family.

The protein localises to the cytoplasm. The catalysed reaction is UDP-N-acetyl-alpha-D-muramate + L-alanine + ATP = UDP-N-acetyl-alpha-D-muramoyl-L-alanine + ADP + phosphate + H(+). It functions in the pathway cell wall biogenesis; peptidoglycan biosynthesis. In terms of biological role, cell wall formation. The protein is UDP-N-acetylmuramate--L-alanine ligase of Pectobacterium carotovorum subsp. carotovorum (strain PC1).